A 386-amino-acid chain; its full sequence is Acyl-lipid omega-3 desaturase (cytochrome b5), endoplasmic reticulum (386 aa).

The tract at residues 1–30 is disordered; the sequence is MVVAMDQRTNVNGDPGAGDRKKEERFDPSA. The span at 17–27 shows a compositional bias: basic and acidic residues; it reads AGDRKKEERFD. Residues 63–83 traverse the membrane as a helical segment; that stretch reads IIAVAALAIAAVYVDSWFLWP. Positions 101-105 match the Histidine box-1 motif; sequence HDCGH. Residues 137–141 carry the Histidine box-2 motif; the sequence is HRTHH. Helical transmembrane passes span 220 to 240 and 242 to 262; these read WSIM…LAVL and VYGV…YLHH. A Histidine box-3 motif is present at residues 304 to 308; sequence HVIHH.

This sequence belongs to the fatty acid desaturase type 1 family. In terms of tissue distribution, abundant in leaves and seedlings. Barely detectable in root tissue.

It localises to the endoplasmic reticulum membrane. It carries out the reaction a (9Z,12Z)-octadecadienoyl-containing glycerolipid + 2 Fe(II)-[cytochrome b5] + O2 + 2 H(+) = (9Z,12Z,15Z)-octadecatrienoyl-containing glycerolipid + 2 Fe(III)-[cytochrome b5] + 2 H2O. It participates in lipid metabolism; polyunsaturated fatty acid biosynthesis. In terms of biological role, microsomal (ER) omega-3 fatty acid desaturase introduces the third double bond in the biosynthesis of 18:3 fatty acids, important constituents of plant membranes. It is thought to use cytochrome b5 as an electron donor and to act on fatty acids esterified to phosphatidylcholine and, possibly, other phospholipids. The chain is Acyl-lipid omega-3 desaturase (cytochrome b5), endoplasmic reticulum from Arabidopsis thaliana (Mouse-ear cress).